The sequence spans 136 residues: Large ribosomal subunit protein uL16 (136 aa).

The protein belongs to the universal ribosomal protein uL16 family. In terms of assembly, part of the 50S ribosomal subunit.

Binds 23S rRNA and is also seen to make contacts with the A and possibly P site tRNAs. This is Large ribosomal subunit protein uL16 from Aggregatibacter actinomycetemcomitans (Actinobacillus actinomycetemcomitans).